Here is a 273-residue protein sequence, read N- to C-terminus: Putative pyruvate, phosphate dikinase regulatory protein (273 aa).

153 to 160 (GVSRTSKT) contacts ADP.

The protein belongs to the pyruvate, phosphate/water dikinase regulatory protein family. PDRP subfamily.

The enzyme catalyses N(tele)-phospho-L-histidyl/L-threonyl-[pyruvate, phosphate dikinase] + ADP = N(tele)-phospho-L-histidyl/O-phospho-L-threonyl-[pyruvate, phosphate dikinase] + AMP + H(+). It catalyses the reaction N(tele)-phospho-L-histidyl/O-phospho-L-threonyl-[pyruvate, phosphate dikinase] + phosphate + H(+) = N(tele)-phospho-L-histidyl/L-threonyl-[pyruvate, phosphate dikinase] + diphosphate. Its function is as follows. Bifunctional serine/threonine kinase and phosphorylase involved in the regulation of the pyruvate, phosphate dikinase (PPDK) by catalyzing its phosphorylation/dephosphorylation. This chain is Putative pyruvate, phosphate dikinase regulatory protein, found in Rhizobium meliloti (strain 1021) (Ensifer meliloti).